A 169-amino-acid polypeptide reads, in one-letter code: MVAVRWGRKGLRSQRRKYSRIAYKPPSSKVVSHVESVLNKRDVTGAEVKPFADGSRYSMKKVMLIATLTMAPGELVNYLIVKSNSPIANWSSSFSNPSLMVKESVQDTVTIVGGGKLESSGTAGKDVTKSFRKFVKLGSGISQTQHLYLIIYSSDAMKITLETRMYIDV.

This sequence belongs to the nanoviridae capsid protein family.

It is found in the virion. The sequence is that of Capsid protein (DNA-S) from Subterranean clover stunt virus (strain F) (SCSV).